Here is a 574-residue protein sequence, read N- to C-terminus: Squalene monooxygenase (574 aa).

At 1-20 (MWTFLGIATFTYFYKKFGDF) the chain is on the cytoplasmic side. An interaction with MARCHF6 region spans residues 1–100 (MWTFLGIATF…EQLEARRRRK (100 aa)). An intramembrane segment occupies 21 to 41 (ITLANREVLLCVLVFLSLGLV). Residues 42 to 574 (LSYRCRHRNG…IYSEMKYMVH (533 aa)) lie on the Cytoplasmic side of the membrane. Residues 62 to 73 (QFALFSDILSGL) are required for degradation in response to high membrane cholesterol levels. The interval 118–574 (TSSQNDPEVI…IYSEMKYMVH (457 aa)) is sufficient for enzyme activity. Residues 133–134 (VL), 153–154 (ER), Arg161, Phe166, Arg234, Val250, Asp408, and Met421 contribute to the FAD site. The hydrophobic; mediates interaction with membranes stretch occupies residues 516 to 574 (PLVLIGHFFAVAIYAVYFCFKSEPWITKPRALLSSGAVLYKACSVIFPLIYSEMKYMVH).

Belongs to the squalene monooxygenase family. As to quaternary structure, interacts (via N-terminal domain) with MARCHF6. Interacts with SMIM22; this interaction modulates lipid droplet formation. FAD is required as a cofactor. Ubiquitinated by MARCHF6 in response to high cholesterol levels in intracellular membranes, leading to proteasomal degradation. Detected in liver (at protein level).

The protein localises to the microsome membrane. It is found in the endoplasmic reticulum membrane. The enzyme catalyses squalene + reduced [NADPH--hemoprotein reductase] + O2 = (S)-2,3-epoxysqualene + oxidized [NADPH--hemoprotein reductase] + H2O + H(+). The protein operates within terpene metabolism; lanosterol biosynthesis; lanosterol from farnesyl diphosphate: step 2/3. With respect to regulation, inhibited by NB-598 ((E)N-ethyl-N-(6,6-dimethyl-2-hepten-4-ynyl)-3-[(3,3'-bi-thiophen-5-yl)methoxy]benzene-methanamine). Contrary to fungal enzymes, the mammalian enzyme is only slightly inhibited by terbinafine. Inhibited by tellurite, tellurium dioxide, selenite, and selenium dioxide. Catalyzes the stereospecific oxidation of squalene to (S)-2,3-epoxysqualene, and is considered to be a rate-limiting enzyme in steroid biosynthesis. The protein is Squalene monooxygenase (SQLE) of Homo sapiens (Human).